The following is a 647-amino-acid chain: Chaperone protein HtpG (647 aa).

The interval 1–353 (MNAHVEQLEF…AQDMSLNVSR (353 aa)) is a; substrate-binding. Positions 354–567 (EILQQDRQIK…AFGMTPALAR (214 aa)) are b. The segment at 568 to 647 (IYRASGQEVP…LLAERLARTL (80 aa)) is c.

Belongs to the heat shock protein 90 family. In terms of assembly, homodimer.

The protein localises to the cytoplasm. Functionally, molecular chaperone. Has ATPase activity. The chain is Chaperone protein HtpG from Mycobacterium bovis (strain ATCC BAA-935 / AF2122/97).